We begin with the raw amino-acid sequence, 324 residues long: Probable tRNA pseudouridine synthase B (324 aa).

Asp72 (nucleophile) is an active-site residue. The PUA domain occupies 239–314 (LPRVVILDSA…LVIETRKVFM (76 aa)).

The protein belongs to the pseudouridine synthase TruB family. Type 2 subfamily.

The catalysed reaction is uridine(55) in tRNA = pseudouridine(55) in tRNA. Functionally, could be responsible for synthesis of pseudouridine from uracil-55 in the psi GC loop of transfer RNAs. The sequence is that of Probable tRNA pseudouridine synthase B from Methanothermobacter thermautotrophicus (strain ATCC 29096 / DSM 1053 / JCM 10044 / NBRC 100330 / Delta H) (Methanobacterium thermoautotrophicum).